The sequence spans 177 residues: RNA polymerase sigma-E factor (177 aa).

Positions 34-47 match the Polymerase core binding motif; it reads DLLQTALARTYGRW. Residues 128–147 constitute a DNA-binding region (H-T-H motif); that stretch reads TEETAAALGMSAGTVKSTLH.

Belongs to the sigma-70 factor family. ECF subfamily.

It is found in the cytoplasm. Its function is as follows. Sigma factors are initiation factors that promote the attachment of RNA polymerase to specific initiation sites and are then released. This sigma factor is required for normal cell wall integrity; it is recruited by RNA polymerase to transcribe genes with cell wall-related functions. It is also involved in the transcription of the dagA gene coding for an extracellular agar-degrading enzyme. The chain is RNA polymerase sigma-E factor (sigE) from Streptomyces coelicolor (strain ATCC BAA-471 / A3(2) / M145).